A 255-amino-acid chain; its full sequence is Probable iron chelatin transport ATP-binding protein HP_0888 (255 aa).

One can recognise an ABC transporter domain in the interval 3–240 (LEVKNLSFKY…HNLSALYDTP (238 aa)). 35–42 (APNGSGKT) is an ATP binding site.

This sequence belongs to the ABC transporter superfamily.

The protein localises to the cell inner membrane. Functionally, part of a binding-protein-dependent transport system for an iron chelatin. Probably responsible for energy coupling to the transport system (Potential). This chain is Probable iron chelatin transport ATP-binding protein HP_0888, found in Helicobacter pylori (strain ATCC 700392 / 26695) (Campylobacter pylori).